The primary structure comprises 164 residues: Arginine repressor (164 aa).

It belongs to the ArgR family.

Its subcellular location is the cytoplasm. Its pathway is amino-acid biosynthesis; L-arginine biosynthesis [regulation]. In terms of biological role, regulates arginine biosynthesis genes. The protein is Arginine repressor of Mycolicibacterium paratuberculosis (strain ATCC BAA-968 / K-10) (Mycobacterium paratuberculosis).